The chain runs to 565 residues: MAPRTQKSTSGTPGGSGTPGPDEGPQISPGGTYGLEDVVVGCKAFVQKPDVVTGEMEERKAEILSIREKPKPRLTKKQQAELADKPAPTLEETLEYYVHYCEFNKRLDEWVSGTRLITSRELEWPKKEVTSDKTKRKVIRAGSGATTPSTPLTPTGKGYRGAGASNLLKKAAAQAAKNVQGESGLETPQKRKADSGDTSTAQSIRADSIDADADGEDDENGAVVAMEMLGGNDQQEKDDVATESNGGLTASLNANQGQETFSKKQEIEKLRTSGSMTQSVSEVARVKNLNKIQMGKSEVETWYFSPYPLEYAHIDTLYICEMCLSYFPSPFTLKRHRSKCTLLHPPGNEIYRHEDISFFEIDGRLQRTWCRNLCLLSKCFLDHKTLYYDVDPFLYYCMVKRDDLGCHLLGYFSKEKDSAENYNVACILTLPQHQRAGYGKLLIEFSYELTKIEGKLGSPEKPLSDLGLLSYRAYWAEIIVELLLKTEDEISIEEIAQKTAFTHADILHTCMALNMLKQYQGKHMIVLSDLIISKYTAKRPRKRINPQKLHWTAKNWHRSQLNFGW.

Residues 1–33 (MAPRTQKSTSGTPGGSGTPGPDEGPQISPGGTY) are disordered. One can recognise a Tudor-knot domain in the interval 38 to 117 (VVVGCKAFVQ…DEWVSGTRLI (80 aa)). Positions 173-217 (AQAAKNVQGESGLETPQKRKADSGDTSTAQSIRADSIDADADGED) are disordered. Residues 284–553 (ARVKNLNKIQ…INPQKLHWTA (270 aa)) enclose the MYST-type HAT domain. The segment at 317–342 (LYICEMCLSYFPSPFTLKRHRSKCTL) adopts a C2HC MYST-type zinc-finger fold. The short motif at 367–388 (RTWCRNLCLLSKCFLDHKTLYY) is the ESA1-RPD3 motif element. An N6-acetyllysine; by autocatalysis modification is found at Lys384. Acetyl-CoA-binding positions include 425-429 (ACILT) and 434-440 (QRAGYGK). Residue Glu460 is the Proton donor/acceptor of the active site. Ser464 lines the acetyl-CoA pocket.

This sequence belongs to the MYST (SAS/MOZ) family. Component of the NuA4 histone acetyltransferase complex. Post-translationally, autoacetylation at Lys-384 is required for proper function.

Its subcellular location is the nucleus. It localises to the chromosome. It carries out the reaction L-lysyl-[histone] + acetyl-CoA = N(6)-acetyl-L-lysyl-[histone] + CoA + H(+). The catalysed reaction is L-lysyl-[protein] + acetyl-CoA = N(6)-acetyl-L-lysyl-[protein] + CoA + H(+). The enzyme catalyses 2-hydroxyisobutanoyl-CoA + L-lysyl-[protein] = N(6)-(2-hydroxyisobutanoyl)-L-lysyl-[protein] + CoA + H(+). It catalyses the reaction (2E)-butenoyl-CoA + L-lysyl-[protein] = N(6)-(2E)-butenoyl-L-lysyl-[protein] + CoA + H(+). Its function is as follows. Catalytic component of the NuA4 histone acetyltransferase (HAT) complex which is involved in epigenetic transcriptional activation of selected genes principally by acetylation of nucleosomal histones H4, H3, H2B, H2A and H2A variant H2A.Z. Acetylates histone H4 to form H4K5ac, H4K8ac, H4K12ac and H4K16ac, histone H3 to form H3K14ac, and histone H2A to form H2AK4ac and H2AK7ac. The NuA4 complex is involved in the DNA damage response and is required for chromosome segregation. The NuA4 complex plays a direct role in repair of DNA double-strand breaks (DSBs) through homologous recombination. Recruitment to promoters depends on H3K4me. Also acetylates non-histone proteins. In addition to protein acetyltransferase, can use different acyl-CoA substrates, such as 2-hydroxyisobutanoyl-CoA (2-hydroxyisobutyryl-CoA) or (2E)-butenoyl-CoA (crotonyl-CoA), and is able to mediate protein 2-hydroxyisobutyrylation and crotonylation, respectively. This Mycosarcoma maydis (Corn smut fungus) protein is Histone acetyltransferase ESA1 (ESA1).